Consider the following 265-residue polypeptide: MSYFDINDILAEEQKITCNFFYDAYNLGQLEEGSRDPDMKKGSKVDLPYWMALALAKSNFVSVIMPPEYQDEYKNKLIADPNVISMRLFPYYDKIGVQLSDFFGDRKLKLLLFRVFRERFLNIYSQSINLKETDISKILGNLTYQEREVFSNGYKSSNDYDKWMSRKGEKVEKNTNNLLISTSSNNKNNSSNSSNNNSNNNNNNNNNNNNNNNNNNNNNNNNSNSNSNSNSNSSNGNNNNNSQNSSYKNTQSTTVKKRKRMFDDE.

Residues 180–265 (ISTSSNNKNN…KKRKRMFDDE (86 aa)) are disordered. Residues 183–246 (SSNNKNNSSN…NNNNNSQNSS (64 aa)) are compositionally biased toward low complexity. Basic residues predominate over residues 255-265 (VKKRKRMFDDE).

This sequence belongs to the GINS3/PSF3 family. In terms of assembly, component of the GINS complex which is a heterotetramer of gins1, gins2, gins3 and gins4.

Its subcellular location is the nucleus. In terms of biological role, the GINS complex plays an essential role in the initiation of DNA replication. The sequence is that of Probable DNA replication complex GINS protein PSF3 (gins3) from Dictyostelium discoideum (Social amoeba).